The chain runs to 471 residues: Probable flavin-containing monoamine oxidase B (471 aa).

An S-8alpha-FAD cysteine modification is found at Cys-406.

Belongs to the flavin monoamine oxidase family. The cofactor is FAD.

It catalyses the reaction a secondary aliphatic amine + O2 + H2O = a primary amine + an aldehyde + H2O2. This is Probable flavin-containing monoamine oxidase B (maoB-1) from Dictyostelium discoideum (Social amoeba).